A 384-amino-acid polypeptide reads, in one-letter code: Flap endonuclease 1 (384 aa).

The N-domain stretch occupies residues 1 to 105 (MGVKGLNQLI…GELEKRLLKR (105 aa)). Aspartate 34 is a binding site for Mg(2+). DNA-binding residues include arginine 47 and arginine 71. 5 residues coordinate Mg(2+): aspartate 87, glutamate 159, glutamate 161, aspartate 180, and aspartate 182. The I-domain stretch occupies residues 123–254 (DMTKYQKRLV…VTAYKLIKEH (132 aa)). Residue glutamate 159 participates in DNA binding. DNA contacts are provided by glycine 232 and aspartate 234. Aspartate 234 serves as a coordination point for Mg(2+). The interval 341-349 (IQGRLDGFF) is interaction with PCNA. The segment at 354-384 (KYSNTSPLGKDDKKRKTNDKKGAAAKKTKRR) is disordered. Over residues 362–375 (GKDDKKRKTNDKKG) the composition is skewed to basic and acidic residues.

This sequence belongs to the XPG/RAD2 endonuclease family. FEN1 subfamily. In terms of assembly, interacts with PCNA. Three molecules of FEN1 bind to one PCNA trimer with each molecule binding to one PCNA monomer. PCNA stimulates the nuclease activity without altering cleavage specificity. It depends on Mg(2+) as a cofactor. In terms of processing, phosphorylated. Phosphorylation upon DNA damage induces relocalization to the nuclear plasma.

The protein localises to the nucleus. It is found in the nucleolus. Its subcellular location is the nucleoplasm. It localises to the mitochondrion. Functionally, structure-specific nuclease with 5'-flap endonuclease and 5'-3' exonuclease activities involved in DNA replication and repair. During DNA replication, cleaves the 5'-overhanging flap structure that is generated by displacement synthesis when DNA polymerase encounters the 5'-end of a downstream Okazaki fragment. It enters the flap from the 5'-end and then tracks to cleave the flap base, leaving a nick for ligation. Also involved in the long patch base excision repair (LP-BER) pathway, by cleaving within the apurinic/apyrimidinic (AP) site-terminated flap. Acts as a genome stabilization factor that prevents flaps from equilibrating into structures that lead to duplications and deletions. Also possesses 5'-3' exonuclease activity on nicked or gapped double-stranded DNA, and exhibits RNase H activity. Also involved in replication and repair of rDNA and in repairing mitochondrial DNA. The polypeptide is Flap endonuclease 1 (Lodderomyces elongisporus (strain ATCC 11503 / CBS 2605 / JCM 1781 / NBRC 1676 / NRRL YB-4239) (Yeast)).